The chain runs to 449 residues: Tryptophan--tRNA ligase (449 aa).

ATP is bound by residues 10-12 and 18-19; these read TTT and GN. The 'HIGH' region signature appears at 11 to 19; that stretch reads TTGTPHLGN. D143 serves as a coordination point for L-tryptophan. ATP contacts are provided by residues 155 to 157, L197, and 204 to 208; these read GRD and KMSKS. The short motif at 204–208 is the 'KMSKS' region element; the sequence is KMSKS.

Belongs to the class-I aminoacyl-tRNA synthetase family. In terms of assembly, homodimer.

It is found in the cytoplasm. It carries out the reaction tRNA(Trp) + L-tryptophan + ATP = L-tryptophyl-tRNA(Trp) + AMP + diphosphate + H(+). Functionally, catalyzes the attachment of tryptophan to tRNA(Trp). The chain is Tryptophan--tRNA ligase from Pseudomonas putida (strain ATCC 47054 / DSM 6125 / CFBP 8728 / NCIMB 11950 / KT2440).